We begin with the raw amino-acid sequence, 364 residues long: Peroxidase (364 aa).

The signal sequence occupies residues 1–20 (MKLSLFSTFAAVIIGALALP). Residue Gln21 is modified to Pyrrolidone carboxylic acid. Intrachain disulfides connect Cys32/Cys44, Cys43/Cys313, Cys63/Cys149, and Cys277/Cys342. The active-site Proton acceptor is the His76. 4 residues coordinate Ca(2+): Asp77, Gly95, Asp97, and Ser99. N-linked (GlcNAc...) (high mannose) asparagine glycosylation is present at Asn163. Heme b is bound at residue His204. Ser205, Asp222, Thr224, Val227, and Asp229 together coordinate Ca(2+).

It belongs to the peroxidase family. Ligninase subfamily. Requires Ca(2+) as cofactor. It depends on heme b as a cofactor.

The protein localises to the secreted. The enzyme catalyses 2 a phenolic donor + H2O2 = 2 a phenolic radical donor + 2 H2O. The sequence is that of Peroxidase from Arthromyces ramosus.